Reading from the N-terminus, the 113-residue chain is uncharacterized protein (113 aa).

This is an uncharacterized protein from Escherichia coli O6:H1 (strain CFT073 / ATCC 700928 / UPEC).